A 90-amino-acid chain; its full sequence is Probable Fe(2+)-trafficking protein (90 aa).

The protein belongs to the Fe(2+)-trafficking protein family.

Could be a mediator in iron transactions between iron acquisition and iron-requiring processes, such as synthesis and/or repair of Fe-S clusters in biosynthetic enzymes. The sequence is that of Probable Fe(2+)-trafficking protein from Aliivibrio fischeri (strain ATCC 700601 / ES114) (Vibrio fischeri).